A 391-amino-acid chain; its full sequence is 5-amino-6-(D-ribitylamino)uracil--L-tyrosine 4-hydroxyphenyl transferase (391 aa).

In terms of domain architecture, Radical SAM core spans 55–302 (VTYVINRNIN…GAVARIYLGN (248 aa)). 3 residues coordinate [4Fe-4S] cluster: Cys-69, Cys-73, and Cys-76.

The protein belongs to the radical SAM superfamily. CofH family. As to quaternary structure, consists of two subunits, CofG and CofH. Requires [4Fe-4S] cluster as cofactor.

It catalyses the reaction 5-amino-6-(D-ribitylamino)uracil + L-tyrosine + S-adenosyl-L-methionine = 5-amino-5-(4-hydroxybenzyl)-6-(D-ribitylimino)-5,6-dihydrouracil + 2-iminoacetate + 5'-deoxyadenosine + L-methionine + H(+). It participates in cofactor biosynthesis; coenzyme F0 biosynthesis. Functionally, catalyzes the radical-mediated synthesis of 5-amino-5-(4-hydroxybenzyl)-6-(D-ribitylimino)-5,6-dihydrouracil from 5-amino-6-(D-ribitylamino)uracil and L-tyrosine. This Trichormus variabilis (strain ATCC 29413 / PCC 7937) (Anabaena variabilis) protein is 5-amino-6-(D-ribitylamino)uracil--L-tyrosine 4-hydroxyphenyl transferase.